The sequence spans 137 residues: Small ribosomal subunit protein uS9c (137 aa).

Belongs to the universal ribosomal protein uS9 family.

It is found in the plastid. The protein resides in the chloroplast. In Gracilaria tenuistipitata var. liui (Red alga), this protein is Small ribosomal subunit protein uS9c (rps9).